We begin with the raw amino-acid sequence, 734 residues long: Photosystem I P700 chlorophyll a apoprotein A2 (734 aa).

Helical transmembrane passes span 46 to 69, 135 to 158, 175 to 199, 273 to 291, 330 to 353, 369 to 395, 417 to 439, and 517 to 535; these read IFASHFGQLAIIFLWTSGNLFHVA, LYTGALFLLFLSAISLIAGWLHLQ, LNHHLSGLFGVSSLAWTGHLVHVAI, MAHHHLAIAFIFLVAGHMY, LHFQLGLALASLGVITSLVAQHMY, AALYTHHQYIAGFIMTGAFAHGAIFFI, AIISHLSWASLFLGFHTLGLYVH, and FLVHHAIALGLHTTTLILV. Positions 559 and 568 each coordinate [4Fe-4S] cluster. 2 helical membrane-spanning segments follow: residues 575-596 and 643-665; these read AFYLAVFWMLNTIGWVTFYWHW and LSVWAWMFLFGHLVWATGFMFLI. Chlorophyll a is bound by residues H654, M662, and Y670. A phylloquinone-binding site is contributed by W671. A helical membrane pass occupies residues 707–727; the sequence is LVGLAHFSVGYIFTYAAFLIA.

It belongs to the PsaA/PsaB family. The PsaA/B heterodimer binds the P700 chlorophyll special pair and subsequent electron acceptors. PSI consists of a core antenna complex that captures photons, and an electron transfer chain that converts photonic excitation into a charge separation. The eukaryotic PSI reaction center is composed of at least 11 subunits. P700 is a chlorophyll a/chlorophyll a' dimer, A0 is one or more chlorophyll a, A1 is one or both phylloquinones and FX is a shared 4Fe-4S iron-sulfur center. serves as cofactor.

It localises to the plastid. The protein localises to the chloroplast thylakoid membrane. It carries out the reaction reduced [plastocyanin] + hnu + oxidized [2Fe-2S]-[ferredoxin] = oxidized [plastocyanin] + reduced [2Fe-2S]-[ferredoxin]. Its function is as follows. PsaA and PsaB bind P700, the primary electron donor of photosystem I (PSI), as well as the electron acceptors A0, A1 and FX. PSI is a plastocyanin-ferredoxin oxidoreductase, converting photonic excitation into a charge separation, which transfers an electron from the donor P700 chlorophyll pair to the spectroscopically characterized acceptors A0, A1, FX, FA and FB in turn. Oxidized P700 is reduced on the lumenal side of the thylakoid membrane by plastocyanin. In Cucumis sativus (Cucumber), this protein is Photosystem I P700 chlorophyll a apoprotein A2.